We begin with the raw amino-acid sequence, 44 residues long: Photosystem I reaction center subunit IX (44 aa).

The chain crosses the membrane as a helical span at residues 7 to 27; that stretch reads YLSVAPVLSTLWFGALAGLLI.

This sequence belongs to the PsaJ family.

Its subcellular location is the plastid. It is found in the chloroplast thylakoid membrane. In terms of biological role, may help in the organization of the PsaE and PsaF subunits. The polypeptide is Photosystem I reaction center subunit IX (Solanum bulbocastanum (Wild potato)).